A 460-amino-acid polypeptide reads, in one-letter code: Phosphoglucomutase (460 aa).

Catalysis depends on S103, which acts as the Phosphoserine intermediate. S103 contributes to the Mg(2+) binding site. Substrate-binding positions include 103 to 104 (SH) and K113. Residues D239, D241, and D243 each coordinate Mg(2+). Residues 243-244 (DR), T303, and 322-324 (EMS) contribute to the substrate site.

Belongs to the phosphohexose mutase family. The cofactor is Mg(2+).

The protein localises to the cytoplasm. It catalyses the reaction alpha-D-glucose 1-phosphate = alpha-D-glucose 6-phosphate. Functionally, this enzyme participates in both the breakdown and synthesis of glucose. The polypeptide is Phosphoglucomutase (pgm) (Neisseria meningitidis serogroup A / serotype 4A (strain DSM 15465 / Z2491)).